A 420-amino-acid polypeptide reads, in one-letter code: Glycogen synthase kinase-3 beta (420 aa).

A compositionally biased stretch (polar residues) spans 1-22; that stretch reads MSGRPRTTSFAESCKPVQQPSA. The tract at residues 1–53 is disordered; the sequence is MSGRPRTTSFAESCKPVQQPSAFGSMKVSRDKDGSKVTTVVATPGQGPDRPQE. Position 9 is a phosphoserine; by PKB/AKT1, RPS6KA3 and SGK3 (Ser-9). The S-palmitoyl cysteine moiety is linked to residue Cys-14. The Protein kinase domain maps to 56 to 340; it reads YTDTKVIGNG…PLEACAHSFF (285 aa). Residues 62 to 70 and Lys-85 contribute to the ATP site; that span reads IGNGSFGVV. Catalysis depends on Asp-181, which acts as the Proton acceptor. Tyr-216 bears the Phosphotyrosine mark. The interval 385-420 is disordered; sequence QAAASPPANATAASDTNAGDRGQTNNAASASASNST. Composition is skewed to low complexity over residues 386–401 and 409–420; these read AAAS…SDTN and NNAASASASNST. A Phosphoserine modification is found at Ser-389.

It belongs to the protein kinase superfamily. CMGC Ser/Thr protein kinase family. GSK-3 subfamily. In terms of assembly, monomer. Interacts with DAB2IP (via C2 domain); the interaction stimulates GSK3B kinase activation. Interacts (via C2 domain) with PPP2CA. Interacts with CABYR, MMP2, MUC1, NIN and PRUNE1. Interacts with AXIN1; the interaction mediates hyperphosphorylation of CTNNB1 leading to its ubiquitination and destruction. Interacts with and phosphorylates SNAI1. Interacts with DNM1L (via a C-terminal domain). Interacts with ARRB2. Interacts with DISC1. Found in a complex composed of MACF1, APC, AXIN1, CTNNB1 and GSK3B. Interacts with SGK3. Interacts with the CLOCK-BMAL1 heterodimer. Interacts with ZBED3. Interacts with the BMAL1. The complex composed, at least, of APC, CTNNB1 and GSK3B interacts with JPT1; the interaction requires the inactive form of GSK3B (phosphorylated at 'Ser-9'). Forms a complex composed of PRKAR2A or PRKAR2B, GSK3B and GSKIP through GSKIP interaction; facilitates PKA-induced phosphorylation and regulates GSK3B activity. Interacts with GSKIP. Interacts with GID8. Interacts with PIWIL2. Interacts with LMBR1L. Interacts with DDX3X. Interacts with BIRC2. Interacts with TNFRSF10B; TNFRSF10B stimulation inhibits GSK3B kinase activity. Found in a complex with SLC39A6, SLC39A10 and with GSK3B that controls NCAM1 phosphorylation. Interacts with PKP3 (via ARM repeats); the interaction may be involved in PKP3 protein degradation. Post-translationally, phosphorylated by AKT1 and ILK1. Upon insulin-mediated signaling, the activated PKB/AKT1 protein kinase phosphorylates and deactivates GSK3B, resulting in the dephosphorylation and activation of GYS1. Activated by phosphorylation at Tyr-216. Phosphorylation of Ser-9 in the hippocampus peaks at CT0, whereas in the liver it peaks at CT12. Inactivated by phosphorylation at Ser-9. Phosphorylated in a circadian manner in the hippocampus. In terms of processing, mono-ADP-ribosylation by PARP10 negatively regulates kinase activity. Palmitoylated. Palmitoylation by ZDHHC4 prevents AKT1-mediated phosphorylation. Expressed in the liver (at protein level).

It localises to the cytoplasm. Its subcellular location is the nucleus. It is found in the cell membrane. The catalysed reaction is L-seryl-[tau protein] + ATP = O-phospho-L-seryl-[tau protein] + ADP + H(+). It catalyses the reaction L-threonyl-[tau protein] + ATP = O-phospho-L-threonyl-[tau protein] + ADP + H(+). The enzyme catalyses L-seryl-[protein] + ATP = O-phospho-L-seryl-[protein] + ADP + H(+). It carries out the reaction L-threonyl-[protein] + ATP = O-phospho-L-threonyl-[protein] + ADP + H(+). Activated by phosphorylation at Tyr-216. In response to insulin, inhibited by phosphorylation at Ser-9 by PKB/AKT1 and RPS6KA3; phosphorylation at this site causes a conformational change, preventing access of substrates to the active site. Inhibited by IL22 treatment which also triggers phosphorylation at Ser-9, promoting inactivation. Inhibited by lithium. In terms of biological role, constitutively active protein kinase that acts as a negative regulator in the hormonal control of glucose homeostasis, Wnt signaling and regulation of transcription factors and microtubules, by phosphorylating and inactivating glycogen synthase (GYS1 or GYS2), EIF2B, CTNNB1/beta-catenin, APC, AXIN1, DPYSL2/CRMP2, JUN, NFATC1/NFATC, MAPT/TAU and MACF1. Requires primed phosphorylation of the majority of its substrates. In skeletal muscle, contributes to insulin regulation of glycogen synthesis by phosphorylating and inhibiting GYS1 activity and hence glycogen synthesis. May also mediate the development of insulin resistance by regulating activation of transcription factors. Regulates protein synthesis by controlling the activity of initiation factor 2B (EIF2BE/EIF2B5) in the same manner as glycogen synthase. In Wnt signaling, GSK3B forms a multimeric complex with APC, AXIN1 and CTNNB1/beta-catenin and phosphorylates the N-terminus of CTNNB1 leading to its degradation mediated by ubiquitin/proteasomes. Phosphorylates JUN at sites proximal to its DNA-binding domain, thereby reducing its affinity for DNA. Phosphorylates NFATC1/NFATC on conserved serine residues promoting NFATC1/NFATC nuclear export, shutting off NFATC1/NFATC gene regulation, and thereby opposing the action of calcineurin. Phosphorylates MAPT/TAU on 'Thr-548', decreasing significantly MAPT/TAU ability to bind and stabilize microtubules. MAPT/TAU is the principal component of neurofibrillary tangles in Alzheimer disease. Plays an important role in ERBB2-dependent stabilization of microtubules at the cell cortex. Phosphorylates MACF1, inhibiting its binding to microtubules which is critical for its role in bulge stem cell migration and skin wound repair. Probably regulates NF-kappa-B (NFKB1) at the transcriptional level and is required for the NF-kappa-B-mediated anti-apoptotic response to TNF-alpha (TNF/TNFA). Negatively regulates replication in pancreatic beta-cells, resulting in apoptosis, loss of beta-cells and diabetes. Through phosphorylation of the anti-apoptotic protein MCL1, may control cell apoptosis in response to growth factors deprivation. Phosphorylates MUC1 in breast cancer cells, decreasing the interaction of MUC1 with CTNNB1/beta-catenin. Is necessary for the establishment of neuronal polarity and axon outgrowth. Phosphorylates MARK2, leading to inhibition of its activity. Phosphorylates SIK1 at 'Thr-182', leading to sustainment of its activity. Phosphorylates ZC3HAV1 which enhances its antiviral activity. Phosphorylates SNAI1, leading to its ubiquitination and proteasomal degradation. Phosphorylates SFPQ at 'Thr-687' upon T-cell activation. Phosphorylates NR1D1 st 'Ser-55' and 'Ser-59' and stabilizes it by protecting it from proteasomal degradation. Regulates the circadian clock via phosphorylation of the major clock components including BMAL1, CLOCK and PER2. Phosphorylates CLOCK AT 'Ser-427' and targets it for proteasomal degradation. Phosphorylates BMAL1 at 'Ser-17' and 'Ser-21' and primes it for ubiquitination and proteasomal degradation. Phosphorylates FBXL2 at 'Thr-404' and primes it for ubiquitination by the SCF(FBXO3) complex and proteasomal degradation. Phosphorylates OGT at 'Ser-3' or 'Ser-4' which positively regulates its activity. Phosphorylates MYCN in neuroblastoma cells which may promote its degradation. Regulates the circadian rhythmicity of hippocampal long-term potentiation and BMAL1 and PER2 expression. Acts as a regulator of autophagy by mediating phosphorylation of KAT5/TIP60 under starvation conditions, activating KAT5/TIP60 acetyltransferase activity and promoting acetylation of key autophagy regulators, such as ULK1 and RUBCNL/Pacer. Negatively regulates extrinsic apoptotic signaling pathway via death domain receptors. Promotes the formation of an anti-apoptotic complex, made of DDX3X, BRIC2 and GSK3B, at death receptors, including TNFRSF10B. The anti-apoptotic function is most effective with weak apoptotic signals and can be overcome by stronger stimulation. Phosphorylates E2F1, promoting the interaction between E2F1 and USP11, stabilizing E2F1 and promoting its activity. Phosphorylates mTORC2 complex component RICTOR at 'Ser-1235' in response to endoplasmic stress, inhibiting mTORC2. Phosphorylates FXR1, promoting FXR1 ubiquitination by the SCF(FBXO4) complex and FXR1 degradation by the proteasome. Phosphorylates interleukin-22 receptor subunit IL22RA1, preventing its proteasomal degradation. The protein is Glycogen synthase kinase-3 beta of Mus musculus (Mouse).